The primary structure comprises 264 residues: Thiazole synthase (264 aa).

The Schiff-base intermediate with DXP role is filled by Lys101. 1-deoxy-D-xylulose 5-phosphate contacts are provided by residues Gly162, 189-190 (AG), and 211-212 (NT). The tract at residues 245–264 (KRQTASPSTPTLGQPFWHNQ) is disordered.

This sequence belongs to the ThiG family. Homotetramer. Forms heterodimers with either ThiH or ThiS.

The protein localises to the cytoplasm. The enzyme catalyses [ThiS sulfur-carrier protein]-C-terminal-Gly-aminoethanethioate + 2-iminoacetate + 1-deoxy-D-xylulose 5-phosphate = [ThiS sulfur-carrier protein]-C-terminal Gly-Gly + 2-[(2R,5Z)-2-carboxy-4-methylthiazol-5(2H)-ylidene]ethyl phosphate + 2 H2O + H(+). Its pathway is cofactor biosynthesis; thiamine diphosphate biosynthesis. In terms of biological role, catalyzes the rearrangement of 1-deoxy-D-xylulose 5-phosphate (DXP) to produce the thiazole phosphate moiety of thiamine. Sulfur is provided by the thiocarboxylate moiety of the carrier protein ThiS. In vitro, sulfur can be provided by H(2)S. This Cellvibrio japonicus (strain Ueda107) (Pseudomonas fluorescens subsp. cellulosa) protein is Thiazole synthase.